Reading from the N-terminus, the 251-residue chain is Short chain dehydrogenase gsfK (251 aa).

Positions 14, 33, 60, 88, and 122 each coordinate NADP(+). Residues Ser143 and Tyr161 each act as proton donor in the active site. Residues Tyr161, Lys165, Val192, and Thr194 each contribute to the NADP(+) site. Lys165 functions as the Lowers pKa of active site Tyr in the catalytic mechanism.

The protein belongs to the short-chain dehydrogenases/reductases (SDR) family.

The protein operates within secondary metabolite biosynthesis; terpenoid biosynthesis. Its function is as follows. Short chain dehydrogenase; part of the gene cluster that mediates the biosynthesis of griseofulvin, an important antifungal drug that has been in use for a long time for treating dermatophyte infections. The first step of the pathway is the formation of the heptaketide backbone by gsfA which is initiated by priming with acetyl-CoA, followed by sequential condensations of 6 malonyl-CoA units. The resulting benzophenone can undergo a spontaneous dehydration to form norlichexanthone. However, the true precursor for the griseofulvin biosynthesis is not norlichexanthone, but the heptaketide benzophenone that is O-methylated at 3-OH by gsfB to produce griseophenone D which is further methylated at 9-OH by gsfC to yield griseophenone C. Griseophenone C is then substrate of halogenase gsfI which is responsible for the regio-specific chlorination at the C13 position to form griseophenone B. The cytochrome P450 gsfF catalyzes the coupling of orcinol and phloroglucinol rings in griseophenone B to form desmethyl-dehydrogriseofulvin A which is further methylated at 5-OH by gsfD to yield dehydrogriseofulvin. Finally, gsfE performs stereospecific reduction of enone 18 of dehydrogriseofulvin to afford the final product griseofulvin. The exact role of gsfK within the pathway has not been identified yet. In Penicillium aethiopicum, this protein is Short chain dehydrogenase gsfK.